The sequence spans 279 residues: Osmoprotective compounds uptake permease protein GgtC (279 aa).

7 helical membrane-spanning segments follow: residues 7-27, 58-78, 90-110, 120-140, 146-166, 202-222, and 247-267; these read LLFL…LSFF, LWLV…AVLV, IIFL…KFVY, IGLL…WLVE, FALI…ILSA, LLVV…IVFV, and FGRG…VMIT. An ABC transmembrane type-1 domain is found at 53–270; it reads FRNNLLWLVL…IVPVMITNIR (218 aa).

Belongs to the binding-protein-dependent transport system permease family. As to quaternary structure, the complex is composed of two ATP-binding proteins (GgtA), two transmembrane proteins (GgtC and GgtD) and a solute-binding protein (GgtB).

It is found in the cell membrane. Its function is as follows. Part of the ABC transporter complex GgtABCD involved in the uptake of the osmoprotective compounds glucosylglycerol (GG), sucrose and trehalose. Responsible for the translocation of the substrate across the membrane. The sequence is that of Osmoprotective compounds uptake permease protein GgtC from Synechocystis sp. (strain ATCC 27184 / PCC 6803 / Kazusa).